Here is a 184-residue protein sequence, read N- to C-terminus: Fungal defensin copsin (184 aa).

Positions 1-23 (MKLSTSLLAIVAVASTFIGNALS) are cleaved as a signal peptide. A propeptide spanning residues 24–127 (ATTVPGCFAE…LGRVLPVEKR (104 aa)) is cleaved from the precursor. Gln-128 is subject to Pyrrolidone carboxylic acid. Intrachain disulfides connect Cys-130–Cys-159, Cys-137–Cys-167, Cys-145–Cys-175, Cys-149–Cys-177, Cys-152–Cys-184, and Cys-162–Cys-181.

It belongs to the invertebrate defensin family. Post-translationally, contains a unique connectivity of 6 cysteine bonds in contrast to most other CS-alpha-beta defensins which are linked by 3 or 4 disulfide bonds. Disulfide bonds are essential for structural integrity and antibacterial activity, since activity is lost after treatment with reducing agents. Thanks to disulfide bonds and N-terminal pyroglutamate, the protein is extremely stable in a wide pH and temperature range and insensitive toward proteases.

Its subcellular location is the secreted. It is found in the target cell membrane. Its function is as follows. Antimicrobial peptide that acts against Gram-positive bacteria (Listeria spp., Enterococcus spp., B.subtilis, B.anthracis, P.aeruginosa). Is not active against Gram-negative bacteria. It selectively inhibits peptidoglycan biosynthesis through complex formation with the cell wall precursor lipid II (1:1 molar ratio), probably anchoring lipid II to the membrane, thus inhibiting cell wall synthesis. The interaction with lipid II involves the third position of the pentapeptide. Shows bactericidal activity at about 2-fold minimal inhibitory concentrations (MIC), but does not form pore across the membrane. The polypeptide is Fungal defensin copsin (Coprinopsis cinerea (Inky cap fungus)).